We begin with the raw amino-acid sequence, 217 residues long: Octanoyltransferase (217 aa).

The BPL/LPL catalytic domain maps to 30–209 (GNRPPTLLLL…AFAEVFGLRP (180 aa)). Residues 75-82 (RGGDVTYH), 139-141 (AIG), and 152-154 (GFA) each bind substrate. Cys170 (acyl-thioester intermediate) is an active-site residue.

This sequence belongs to the LipB family.

Its subcellular location is the cytoplasm. The enzyme catalyses octanoyl-[ACP] + L-lysyl-[protein] = N(6)-octanoyl-L-lysyl-[protein] + holo-[ACP] + H(+). The protein operates within protein modification; protein lipoylation via endogenous pathway; protein N(6)-(lipoyl)lysine from octanoyl-[acyl-carrier-protein]: step 1/2. Its function is as follows. Catalyzes the transfer of endogenously produced octanoic acid from octanoyl-acyl-carrier-protein onto the lipoyl domains of lipoate-dependent enzymes. Lipoyl-ACP can also act as a substrate although octanoyl-ACP is likely to be the physiological substrate. The chain is Octanoyltransferase from Thermus thermophilus (strain ATCC 27634 / DSM 579 / HB8).